A 422-amino-acid polypeptide reads, in one-letter code: Protein TEX1 (422 aa).

5 WD repeats span residues 61–100 (ITPNEILSLKFHVSGSSMAYSRMDGSLTVWFIKDASFDKS), 158–197 (GSKTKVNTCLYDPLGNWLLAATKSEKIYLFDVKKDHSSVC), 207–246 (EDNDVVYSLAWSNGGSHIFIGFKSGYLAILKAKHGILEVC), 251–290 (AHTGPITEIKMDPWGRNFITGSIDGNCYVWNMKSLCCELI), and 293–332 (DLNSAVTTLDVCHLGKILGICTEDEMVYFYDLNSGNLLHS). Residues 388–422 (KRRKNNGGGNNHNKRTSKNTDRIGKDRPSRFNSKK) form a disordered region. Positions 405–416 (KNTDRIGKDRPS) are enriched in basic and acidic residues.

It belongs to the THOC3 family. Component of the transcription/export (TREX) complex and the THO complex.

The protein resides in the nucleus. Functionally, component of the TREX complex, which operates in coupling transcription elongation to mRNA export. The chain is Protein TEX1 (TEX1) from Saccharomyces cerevisiae (strain ATCC 204508 / S288c) (Baker's yeast).